A 265-amino-acid chain; its full sequence is Phosphonates import ATP-binding protein PhnC (265 aa).

Residues 3–247 (LRLKQAFLHH…MLDTLYANEQ (245 aa)) enclose the ABC transporter domain. 36–43 (GPSGAGKS) contributes to the ATP binding site.

The protein belongs to the ABC transporter superfamily. Phosphonates importer (TC 3.A.1.9.1) family. The complex is composed of two ATP-binding proteins (PhnC), two transmembrane proteins (PhnE) and a solute-binding protein (PhnD).

It is found in the cell inner membrane. The enzyme catalyses phosphonate(out) + ATP + H2O = phosphonate(in) + ADP + phosphate + H(+). Part of the ABC transporter complex PhnCDE involved in phosphonates import. Responsible for energy coupling to the transport system. In Pseudomonas fluorescens (strain Pf0-1), this protein is Phosphonates import ATP-binding protein PhnC.